The primary structure comprises 648 residues: Threonine--tRNA ligase (648 aa).

One can recognise a TGS domain in the interval 1 to 61 (MINITFPDGA…TEDGSIEIVT (61 aa)). The interval 242–540 (DHRKLGKELD…LIENYKGAFP (299 aa)) is catalytic. Residues Cys336, His387, and His517 each contribute to the Zn(2+) site.

This sequence belongs to the class-II aminoacyl-tRNA synthetase family. Homodimer. It depends on Zn(2+) as a cofactor.

The protein localises to the cytoplasm. It carries out the reaction tRNA(Thr) + L-threonine + ATP = L-threonyl-tRNA(Thr) + AMP + diphosphate + H(+). Its function is as follows. Catalyzes the attachment of threonine to tRNA(Thr) in a two-step reaction: L-threonine is first activated by ATP to form Thr-AMP and then transferred to the acceptor end of tRNA(Thr). Also edits incorrectly charged L-seryl-tRNA(Thr). In Streptococcus thermophilus (strain ATCC BAA-250 / LMG 18311), this protein is Threonine--tRNA ligase.